The chain runs to 436 residues: 3-ketoacyl-CoA thiolase (436 aa).

Cysteine 99 acts as the Acyl-thioester intermediate in catalysis. Residues histidine 392 and cysteine 422 each act as proton acceptor in the active site.

It belongs to the thiolase-like superfamily. Thiolase family. As to quaternary structure, heterotetramer of two alpha chains (FadJ) and two beta chains (FadI).

Its subcellular location is the cytoplasm. It catalyses the reaction an acyl-CoA + acetyl-CoA = a 3-oxoacyl-CoA + CoA. Its pathway is lipid metabolism; fatty acid beta-oxidation. In terms of biological role, catalyzes the final step of fatty acid oxidation in which acetyl-CoA is released and the CoA ester of a fatty acid two carbons shorter is formed. The sequence is that of 3-ketoacyl-CoA thiolase from Escherichia coli (strain SMS-3-5 / SECEC).